The chain runs to 63 residues: Large ribosomal subunit protein bL28 (63 aa).

This sequence belongs to the bacterial ribosomal protein bL28 family.

This Desulforudis audaxviator (strain MP104C) protein is Large ribosomal subunit protein bL28.